A 252-amino-acid chain; its full sequence is Small ribosomal subunit protein uS3 (252 aa).

Residues 16-85 enclose the KH type-2 domain; it reads IDEYLETKLE…NPQVEVKEVD (70 aa). The segment at 233-252 is disordered; sequence EESEIEEITEEIEDVETLEE.

This sequence belongs to the universal ribosomal protein uS3 family. In terms of assembly, part of the 30S ribosomal subunit.

In terms of biological role, binds the lower part of the 30S subunit head. This is Small ribosomal subunit protein uS3 from Methanosphaera stadtmanae (strain ATCC 43021 / DSM 3091 / JCM 11832 / MCB-3).